The following is a 267-amino-acid chain: Type II pantothenate kinase (267 aa).

ATP is bound at residue 6–13; it reads DAGGTLIK. The Proton acceptor role is filled by Glu70. Residues Thr99, 121 to 125, Tyr137, and Ser225 each bind ATP; that span reads GGMIQ.

It belongs to the type II pantothenate kinase family. In terms of assembly, homodimer.

It localises to the cytoplasm. The catalysed reaction is (R)-pantothenate + ATP = (R)-4'-phosphopantothenate + ADP + H(+). Its pathway is cofactor biosynthesis; coenzyme A biosynthesis; CoA from (R)-pantothenate: step 1/5. Catalyzes the phosphorylation of pantothenate (Pan), the first step in CoA biosynthesis. In Staphylococcus aureus (strain bovine RF122 / ET3-1), this protein is Type II pantothenate kinase.